We begin with the raw amino-acid sequence, 156 residues long: Putative pre-16S rRNA nuclease (156 aa).

Belongs to the YqgF nuclease family.

It is found in the cytoplasm. Functionally, could be a nuclease involved in processing of the 5'-end of pre-16S rRNA. In Bartonella tribocorum (strain CIP 105476 / IBS 506), this protein is Putative pre-16S rRNA nuclease.